Reading from the N-terminus, the 192-residue chain is Fe/S biogenesis protein NfuA (192 aa).

[4Fe-4S] cluster-binding residues include Cys149 and Cys152.

Belongs to the NfuA family. In terms of assembly, homodimer. The cofactor is [4Fe-4S] cluster.

Involved in iron-sulfur cluster biogenesis. Binds a 4Fe-4S cluster, can transfer this cluster to apoproteins, and thereby intervenes in the maturation of Fe/S proteins. Could also act as a scaffold/chaperone for damaged Fe/S proteins. This chain is Fe/S biogenesis protein NfuA, found in Aeromonas hydrophila subsp. hydrophila (strain ATCC 7966 / DSM 30187 / BCRC 13018 / CCUG 14551 / JCM 1027 / KCTC 2358 / NCIMB 9240 / NCTC 8049).